The chain runs to 738 residues: RNA polymerase II degradation factor 1 (738 aa).

One can recognise a CUE domain in the interval 21–63 (ALKSKIDTLTELFPDWTSDDLIDIVQEYDDLETIIDKITSGAV). Over residues 69-84 (VKKPAKKEKYEKKEQQ) the composition is skewed to basic and acidic residues. Disordered stretches follow at residues 69 to 455 (VKKP…QQQQ), 467 to 503 (YLSQ…QGNN), and 640 to 688 (NGQE…QPVN). Low complexity predominate over residues 103-121 (KSSNNSNSFTSTKHNSSNN). The segment covering 211 to 220 (HNNKEEHKQI) has biased composition (basic and acidic residues). Positions 224-237 (SLSSKKTTSRTSAS) are enriched in low complexity. Positions 256–291 (KKTESPLENVAELKKEISDIKKDDQKSEASEEKVNE) are enriched in basic and acidic residues. Phosphoserine is present on residues serine 260, serine 273, and serine 307. Acidic residues-rich tracts occupy residues 298–328 (EQEE…EAEE) and 337–358 (QTAE…EVTV). At threonine 338 the chain carries Phosphothreonine. Low complexity-rich tracts occupy residues 380–455 (VPQP…QQQQ) and 467–498 (YLSQ…PQSQ). The contains the proteolytic activation cleavage site stretch occupies residues 500-530 (QGNNVAAQQYYMYQNQFPGYSYPGMFDSQGY). Serine 646 carries the post-translational modification Phosphoserine. Over residues 660–688 (QKQSQQQQQQQPQGQPQPEVQMQNGQPVN) the composition is skewed to low complexity.

The protein belongs to the DEF1 family. Homodimer; may form higher order oligomers. Interacts with the large RNA polymerase II subunit RPO21; the interaction is direct and serves to bridge RPO21 to the Elongin complex in a manner dependent on transcription stress. Interacts with RAD26. Post-translationally, ubiquitinated. In terms of processing, proteolytically cleaved by the proteasome in response to transcription stress; the resulting N-terminal form constitutes the activated nuclear form and the C-terminal portion is degraded.

It localises to the cytoplasm. It is found in the nucleus. The protein localises to the chromosome. The protein resides in the telomere. Its function is as follows. Recruits the ubiquitination machinery to RNA polymerase II for polyubiquitination, removal and degradation, when the transcription-coupled repair (TCR) factor RAD26 fails to efficiently displace stalled RNA polymerase II. Also involved in telomere length regulation. Binds DNA. This chain is RNA polymerase II degradation factor 1 (DEF1), found in Saccharomyces cerevisiae (strain JAY291) (Baker's yeast).